Here is a 282-residue protein sequence, read N- to C-terminus: 4-hydroxybenzoate octaprenyltransferase (282 aa).

The next 9 membrane-spanning stretches (helical) occupy residues 17–37 (IGIL…NQGF), 40–60 (IDLL…GCVI), 90–110 (AFIL…KLPI), 113–133 (FYFA…KRFL), 135–155 (APQL…FIAS), 163–183 (FIVL…MYAM), 207–227 (LIIA…AINK), 231–251 (WFFY…LKLI), and 262–282 (AFLV…LALI).

This sequence belongs to the UbiA prenyltransferase family. It depends on Mg(2+) as a cofactor.

The protein localises to the cell inner membrane. The enzyme catalyses all-trans-octaprenyl diphosphate + 4-hydroxybenzoate = 4-hydroxy-3-(all-trans-octaprenyl)benzoate + diphosphate. The protein operates within cofactor biosynthesis; ubiquinone biosynthesis. Its function is as follows. Catalyzes the prenylation of para-hydroxybenzoate (PHB) with an all-trans polyprenyl group. Mediates the second step in the final reaction sequence of ubiquinone-8 (UQ-8) biosynthesis, which is the condensation of the polyisoprenoid side chain with PHB, generating the first membrane-bound Q intermediate 3-octaprenyl-4-hydroxybenzoate. The chain is 4-hydroxybenzoate octaprenyltransferase from Legionella pneumophila subsp. pneumophila (strain Philadelphia 1 / ATCC 33152 / DSM 7513).